Here is a 477-residue protein sequence, read N- to C-terminus: uncharacterized protein (477 aa).

Positions 1–18 (MWTALVLVWISSVPLSRS) are cleaved as a signal peptide. Topologically, residues 19–427 (HTVPAVPRHL…DPLTPSLVNK (409 aa)) are extracellular. Residues N40, N51, and N77 are each glycosylated (N-linked (GlcNAc...) asparagine). Disordered stretches follow at residues 79 to 103 (TRVT…GTAD), 239 to 366 (GTIN…TGGP), and 378 to 398 (KATA…DVKV). The span at 85 to 97 (TTPHGTNTSTPTT) shows a compositional bias: low complexity. 2 stretches are compositionally biased toward polar residues: residues 253-288 (PAKS…QPVH) and 298-309 (PSNTTLEPNTPK). A glycan (N-linked (GlcNAc...) asparagine) is linked at N300. Low complexity-rich tracts occupy residues 310–326 (SVAS…QVQT), 348–361 (TSPT…LPTQ), and 378–393 (KATA…SRSS). A helical membrane pass occupies residues 428 to 448 (MFLLVVLIVGVTLFIAVLMMF). Over 449 to 477 (ALQAYESYKKKDYTQVDYLINGMYADSEM) the chain is Cytoplasmic.

Its subcellular location is the cell membrane. The protein resides in the golgi apparatus. The protein localises to the trans-Golgi network membrane. This is an uncharacterized protein from Rattus norvegicus (Rat).